The chain runs to 132 residues: Histone H2B.1 (132 aa).

Low complexity predominate over residues 1 to 13; that stretch reads MSAKASKAPASKA. The interval 1–39 is disordered; the sequence is MSAKASKAPASKAPAEKKPAAKKTSSSTDPSKKRTKARK. At lysine 7 the chain carries N6-acetyllysine; alternate. Residue lysine 7 forms a Glycyl lysine isopeptide (Lys-Gly) (interchain with G-Cter in SUMO); alternate linkage. Serine 11 bears the Phosphoserine mark. Position 12 is an N6-acetyllysine (lysine 12). The residue at position 17 (lysine 17) is an N6-acetyllysine; alternate. Lysine 17 participates in a covalent cross-link: Glycyl lysine isopeptide (Lys-Gly) (interchain with G-Cter in SUMO); alternate. A Glycyl lysine isopeptide (Lys-Gly) (interchain with G-Cter in SUMO) cross-link involves residue lysine 18. Lysine 125 is covalently cross-linked (Glycyl lysine isopeptide (Lys-Gly) (interchain with G-Cter in ubiquitin)).

Belongs to the histone H2B family. The nucleosome is a histone octamer containing two molecules each of H2A, H2B, H3 and H4 assembled in one H3-H4 heterotetramer and two H2A-H2B heterodimers. The octamer wraps approximately 147 bp of DNA. Monoubiquitinated by the UBC2-BRE1 complex to form H2BK123ub1. H2BK123ub1 gives a specific tag for epigenetic transcriptional activation and is also prerequisite for H3K4me and H3K79me formation. H2BK123ub1 also modulates the formation of double-strand breaks during meiosis and is a prerequisite for DNA-damage checkpoint activation. In terms of processing, phosphorylated by STE20 to form H2BS10ph during progression through meiotic prophase. May be correlated with chromosome condensation. Post-translationally, acetylated by GCN5 to form H2BK11ac and H2BK16ac. H2BK16ac can also be formed by ESA1. Acetylation of N-terminal lysines and particularly formation of H2BK11acK16ac has a positive effect on transcription. Sumoylation to form H2BK6su and probably also H2BK16su or H2BK17su, occurs preferentially near the telomeres and represses gene transcription.

The protein localises to the nucleus. It localises to the chromosome. Core component of nucleosome. Nucleosomes wrap and compact DNA into chromatin, limiting DNA accessibility to the cellular machineries which require DNA as a template. Histones thereby play a central role in transcription regulation, DNA repair, DNA replication and chromosomal stability. DNA accessibility is regulated via a complex set of post-translational modifications of histones, also called histone code, and nucleosome remodeling. In Kluyveromyces lactis (strain ATCC 8585 / CBS 2359 / DSM 70799 / NBRC 1267 / NRRL Y-1140 / WM37) (Yeast), this protein is Histone H2B.1 (HTB1).